Consider the following 98-residue polypeptide: High mobility group nucleosome-binding domain-containing protein 3 (98 aa).

4 stretches are compositionally biased toward basic and acidic residues: residues 1–25, 39–52, 61–71, and 80–98; these read MPKR…EPTR, PEPK…KEPG, GKKDEKQEAAK, and GENK…DKNE. The disordered stretch occupies residues 1-98; the sequence is MPKRKSPEGA…KTESVGDKNE (98 aa).

This sequence belongs to the HMGN family.

It localises to the nucleus. The chain is High mobility group nucleosome-binding domain-containing protein 3 (HMGN3) from Gallus gallus (Chicken).